Consider the following 298-residue polypeptide: GTPase Era (298 aa).

The Era-type G domain maps to 4 to 171 (RAGFVALIGR…KEKIVSFLPE (168 aa)). The G1 stretch occupies residues 12–19 (GRTNVGKS). Residue 12–19 (GRTNVGKS) coordinates GTP. Residues 38–42 (QTTRN) form a G2 region. Positions 59–62 (DTPG) are G3. Residues 59–63 (DTPGI) and 121–124 (NKID) each bind GTP. Residues 121–124 (NKID) form a G4 region. The segment at 150-152 (ISA) is G5. Residues 202-280 (LEEEVPHGVY…FLQLWVKVRK (79 aa)) form the KH type-2 domain.

This sequence belongs to the TRAFAC class TrmE-Era-EngA-EngB-Septin-like GTPase superfamily. Era GTPase family. Monomer.

The protein resides in the cytoplasm. It is found in the cell membrane. Its function is as follows. An essential GTPase that binds both GDP and GTP, with rapid nucleotide exchange. Plays a role in 16S rRNA processing and 30S ribosomal subunit biogenesis and possibly also in cell cycle regulation and energy metabolism. This is GTPase Era from Caldanaerobacter subterraneus subsp. tengcongensis (strain DSM 15242 / JCM 11007 / NBRC 100824 / MB4) (Thermoanaerobacter tengcongensis).